The sequence spans 241 residues: Small ribosomal subunit protein eS4 (241 aa).

The S4 RNA-binding domain occupies 37 to 100; it reads LPIVVWARDQ…GKHYRILRDK (64 aa).

This sequence belongs to the eukaryotic ribosomal protein eS4 family.

The protein is Small ribosomal subunit protein eS4 of Methanospirillum hungatei JF-1 (strain ATCC 27890 / DSM 864 / NBRC 100397 / JF-1).